We begin with the raw amino-acid sequence, 287 residues long: Small ribosomal subunit biogenesis GTPase RsgA (287 aa).

Residues 63–223 (KNLLIRPKVA…VIDTPGFGSL (161 aa)) form the CP-type G domain. Residues 113 to 116 (SKMD) and 166 to 174 (GQSGVGKST) each bind GTP. Zn(2+) contacts are provided by Cys-246, Cys-251, His-253, and Cys-259.

The protein belongs to the TRAFAC class YlqF/YawG GTPase family. RsgA subfamily. In terms of assembly, monomer. Associates with 30S ribosomal subunit, binds 16S rRNA. Requires Zn(2+) as cofactor.

The protein resides in the cytoplasm. Its function is as follows. One of several proteins that assist in the late maturation steps of the functional core of the 30S ribosomal subunit. Helps release RbfA from mature subunits. May play a role in the assembly of ribosomal proteins into the subunit. Circularly permuted GTPase that catalyzes slow GTP hydrolysis, GTPase activity is stimulated by the 30S ribosomal subunit. The protein is Small ribosomal subunit biogenesis GTPase RsgA of Malacoplasma penetrans (strain HF-2) (Mycoplasma penetrans).